The sequence spans 523 residues: Probable glucose-1-phosphate adenylyltransferase large subunit, chloroplastic (523 aa).

This sequence belongs to the bacterial/plant glucose-1-phosphate adenylyltransferase family. Heterotetramer.

It is found in the plastid. The protein resides in the chloroplast. The catalysed reaction is alpha-D-glucose 1-phosphate + ATP + H(+) = ADP-alpha-D-glucose + diphosphate. Its pathway is glycan biosynthesis; starch biosynthesis. Its activity is regulated as follows. Activated by 3'phosphoglycerate, inhibited by orthophosphate. Allosteric regulation. Functionally, this protein plays a role in synthesis of starch. It catalyzes the synthesis of the activated glycosyl donor, ADP-glucose from Glc-1-P and ATP. The protein is Probable glucose-1-phosphate adenylyltransferase large subunit, chloroplastic of Arabidopsis thaliana (Mouse-ear cress).